Reading from the N-terminus, the 333-residue chain is Bacteriocin helveticin-J (333 aa).

This heat-sensitive bacteriocin inhibits the growth of closely related Lactobacillus species. The sequence is that of Bacteriocin helveticin-J (hlv) from Lactobacillus helveticus (Lactobacillus suntoryeus).